The following is a 286-amino-acid chain: Putative L-ribulose-5-phosphate 3-epimerase SgbU (286 aa).

Belongs to the L-ribulose-5-phosphate 3-epimerase family.

The catalysed reaction is L-ribulose 5-phosphate = L-xylulose 5-phosphate. Functionally, catalyzes the isomerization of L-xylulose-5-phosphate to L-ribulose-5-phosphate. This is Putative L-ribulose-5-phosphate 3-epimerase SgbU (sgbU) from Haemophilus influenzae (strain ATCC 51907 / DSM 11121 / KW20 / Rd).